A 273-amino-acid chain; its full sequence is MPEMPEVENVRATLQELVPGKKIDQVIVRVPKMIVSTPPDEFVHMLVGQEIEGVRRRGKFLLFDLTNCTILSHLRMEGKFRLMDEKEEVSKHTHIIFHFEDHTELRFLDVRKFGTMEVTNKYGEGETRSIKKLGPEPLTQAFTSTDFATGVKKTSRAIKTALLDQKLVAGVGNIYADEICFEAKVRPERAANSLSDKEIKRIFEATKSIMTEAVALGGSTVRTYVNSQGKLGQYQDKLKVYGKTDEPCVVCGKPIEKIKLNGRGTHFCPNCQK.

Pro-2 serves as the catalytic Schiff-base intermediate with DNA. Catalysis depends on Glu-3, which acts as the Proton donor. Catalysis depends on Lys-59, which acts as the Proton donor; for beta-elimination activity. DNA is bound by residues His-92 and Arg-111. The FPG-type zinc finger occupies Lys-239–Lys-273. Arg-263 acts as the Proton donor; for delta-elimination activity in catalysis.

The protein belongs to the FPG family. In terms of assembly, monomer. Zn(2+) is required as a cofactor.

The enzyme catalyses Hydrolysis of DNA containing ring-opened 7-methylguanine residues, releasing 2,6-diamino-4-hydroxy-5-(N-methyl)formamidopyrimidine.. The catalysed reaction is 2'-deoxyribonucleotide-(2'-deoxyribose 5'-phosphate)-2'-deoxyribonucleotide-DNA = a 3'-end 2'-deoxyribonucleotide-(2,3-dehydro-2,3-deoxyribose 5'-phosphate)-DNA + a 5'-end 5'-phospho-2'-deoxyribonucleoside-DNA + H(+). In terms of biological role, involved in base excision repair of DNA damaged by oxidation or by mutagenic agents. Acts as a DNA glycosylase that recognizes and removes damaged bases. Has a preference for oxidized purines, such as 7,8-dihydro-8-oxoguanine (8-oxoG). Has AP (apurinic/apyrimidinic) lyase activity and introduces nicks in the DNA strand. Cleaves the DNA backbone by beta-delta elimination to generate a single-strand break at the site of the removed base with both 3'- and 5'-phosphates. The chain is Formamidopyrimidine-DNA glycosylase from Listeria monocytogenes serotype 4b (strain F2365).